Reading from the N-terminus, the 1393-residue chain is DNA-directed RNA polymerase subunit beta'' (1393 aa).

Cys224, Cys295, Cys302, and Cys305 together coordinate Zn(2+).

It belongs to the RNA polymerase beta' chain family. RpoC2 subfamily. In terms of assembly, in plastids the minimal PEP RNA polymerase catalytic core is composed of four subunits: alpha, beta, beta', and beta''. When a (nuclear-encoded) sigma factor is associated with the core the holoenzyme is formed, which can initiate transcription. Requires Zn(2+) as cofactor.

It localises to the plastid. The protein localises to the chloroplast. The enzyme catalyses RNA(n) + a ribonucleoside 5'-triphosphate = RNA(n+1) + diphosphate. In terms of biological role, DNA-dependent RNA polymerase catalyzes the transcription of DNA into RNA using the four ribonucleoside triphosphates as substrates. This is DNA-directed RNA polymerase subunit beta'' from Manihot esculenta (Cassava).